The following is a 46-amino-acid chain: Daisho2 (46 aa).

The first 22 residues, 1-22 (MNCLKICGFFFALIAALATAEA), serve as a signal peptide directing secretion.

Hemolymph (at protein level).

The protein localises to the secreted. In terms of biological role, peptide which plays a role in the humoral immune response to a subset of filamentous fungi, including F.oxysporum and F.verticillioides. The sequence is that of Daisho2 from Drosophila melanogaster (Fruit fly).